We begin with the raw amino-acid sequence, 138 residues long: Large ribosomal subunit protein uL16c (138 aa).

It belongs to the universal ribosomal protein uL16 family. As to quaternary structure, part of the 50S ribosomal subunit.

Its subcellular location is the plastid. It is found in the chloroplast. In Chaetosphaeridium globosum (Charophycean green alga), this protein is Large ribosomal subunit protein uL16c.